The chain runs to 170 residues: Putative calmodulin-like protein 6 (170 aa).

EF-hand domains are found at residues 8 to 43 (QQISDFRDAFSLFDKNNDGCISREELATVLTRLGMA), 44 to 79 (PSQEDLQDMIVAVDEDGNGTIEFDEFLAIMKKKLYE), 84 to 119 (DDEEELRKAFRIFDKDDNGFISRNELSMVMASLGEE), and 120 to 155 (MTEDEIDDMMKAADSNNDGQVDYEEFKRVMMSTWNI). Ca(2+) is bound by residues Asp21, Asn23, Asp25, Cys27, Glu32, Asp57, Asp59, Asn61, Thr63, Glu68, Asp97, Asp99, Asn101, Glu108, Asp133, Asn135, Asp137, Gln139, and Glu144.

This sequence belongs to the calmodulin family.

In terms of biological role, potential calcium sensor. This is Putative calmodulin-like protein 6 (CML6) from Oryza sativa subsp. japonica (Rice).